Consider the following 142-residue polypeptide: Hemoglobin subunit alpha-1 (142 aa).

The Globin domain maps to 2–142; sequence VLSPADKTNV…VSTVLTSKYR (141 aa). Histidine 59 provides a ligand contact to O2. Histidine 88 lines the heme b pocket.

Belongs to the globin family. In terms of assembly, heterotetramer of two alpha chains and two beta chains. Red blood cells.

Involved in oxygen transport from the lung to the various peripheral tissues. Functionally, hemopressin acts as an antagonist peptide of the cannabinoid receptor CNR1. Hemopressin-binding efficiently blocks cannabinoid receptor CNR1 and subsequent signaling. The sequence is that of Hemoglobin subunit alpha-1 (HBA1) from Hylobates lar (Lar gibbon).